A 258-amino-acid chain; its full sequence is Snake venom serine protease CL2 (258 aa).

The first 18 residues, 1–18 (MVLIRVLANLLIIQLSYA), serve as a signal peptide directing secretion. A propeptide spanning residues 19–24 (QKSSEL) is cleaved from the precursor. Residues 25-249 (VIGGDECNIN…YTDWIKSIIA (225 aa)) form the Peptidase S1 domain. Disulfide bonds link C31-C163, C50-C66, C98-C256, C142-C210, C174-C189, and C200-C225. N-linked (GlcNAc...) asparagine glycosylation is present at N44. H65 (charge relay system) is an active-site residue. Residue N103 is glycosylated (N-linked (GlcNAc...) asparagine). The active-site Charge relay system is the D110. N121 is a glycosylation site (N-linked (GlcNAc...) asparagine). The Charge relay system role is filled by S204. N251 carries an N-linked (GlcNAc...) asparagine glycan.

The protein belongs to the peptidase S1 family. Snake venom subfamily. As to quaternary structure, monomer. In terms of tissue distribution, expressed by the venom gland.

The protein localises to the secreted. Its function is as follows. Snake venom serine protease that may act in the hemostasis system of the prey. In Trimeresurus stejnegeri (Chinese green tree viper), this protein is Snake venom serine protease CL2.